The primary structure comprises 354 residues: Src kinase-associated phosphoprotein 1 (354 aa).

The PH domain occupies N107–K210. 2 positions are modified to phosphotyrosine: Y142 and Y236. Phosphotyrosine; by FYN occurs at positions 267 and 290. An interaction with FYB1 region spans residues R285–Y290. The SH3 domain occupies D289–E350.

The protein belongs to the SKAP family. In terms of assembly, homodimer. Interacts with FYN. Interacts with PTPRC. Interacts with GRB2 when phosphorylated on Tyr-267. Interacts with FYB1, which is required for SKAP2 protein stability. Part of a complex consisting of SKAP1, FYB1 and CLNK. Interacts with RASGRP1. Interacts with FYB2. Post-translationally, phosphorylated on tyrosines. Phosphorylation by FYN on Tyr-267 is required for GRB2 interaction. Phosphorylation by FYN on Tyr-290 abolishes interaction with FYB1. Tyr-236 is dephosphorylated by PTPRC. Expressed in mast cells (at protein level).

The protein resides in the cytoplasm. Its subcellular location is the nucleus. It is found in the cell membrane. Positively regulates T-cell receptor signaling by enhancing the MAP kinase pathway. Required for optimal conjugation between T-cells and antigen-presenting cells by promoting the clustering of integrin ITGAL on the surface of T-cells. May be involved in high affinity immunoglobulin epsilon receptor signaling in mast cells. The polypeptide is Src kinase-associated phosphoprotein 1 (Skap1) (Rattus norvegicus (Rat)).